The following is a 173-amino-acid chain: Crossover junction endodeoxyribonuclease RuvC (173 aa).

Catalysis depends on residues Asp-8, Glu-67, and Asp-139. 3 residues coordinate Mg(2+): Asp-8, Glu-67, and Asp-139.

This sequence belongs to the RuvC family. In terms of assembly, homodimer which binds Holliday junction (HJ) DNA. The HJ becomes 2-fold symmetrical on binding to RuvC with unstacked arms; it has a different conformation from HJ DNA in complex with RuvA. In the full resolvosome a probable DNA-RuvA(4)-RuvB(12)-RuvC(2) complex forms which resolves the HJ. Requires Mg(2+) as cofactor.

Its subcellular location is the cytoplasm. It carries out the reaction Endonucleolytic cleavage at a junction such as a reciprocal single-stranded crossover between two homologous DNA duplexes (Holliday junction).. Its function is as follows. The RuvA-RuvB-RuvC complex processes Holliday junction (HJ) DNA during genetic recombination and DNA repair. Endonuclease that resolves HJ intermediates. Cleaves cruciform DNA by making single-stranded nicks across the HJ at symmetrical positions within the homologous arms, yielding a 5'-phosphate and a 3'-hydroxyl group; requires a central core of homology in the junction. The consensus cleavage sequence is 5'-(A/T)TT(C/G)-3'. Cleavage occurs on the 3'-side of the TT dinucleotide at the point of strand exchange. HJ branch migration catalyzed by RuvA-RuvB allows RuvC to scan DNA until it finds its consensus sequence, where it cleaves and resolves the cruciform DNA. This Klebsiella pneumoniae (strain 342) protein is Crossover junction endodeoxyribonuclease RuvC.